The following is a 277-amino-acid chain: 5-formyltetrahydrofolate cyclo-ligase, mitochondrial (277 aa).

Residues 1–48 (MIGARVFCITTTALRRSPIFFFPKIPTRPVFRLSPATRPIVAMSTTSK) constitute a mitochondrion transit peptide. 60 to 64 (KRVVR) contributes to the ATP binding site. Residues E113 and 207-211 (RGGGY) contribute to the substrate site. ATP-binding positions include 206–213 (GRGGGYYD) and D254.

This sequence belongs to the 5-formyltetrahydrofolate cyclo-ligase family. Monomer.

The protein localises to the mitochondrion. The catalysed reaction is (6S)-5-formyl-5,6,7,8-tetrahydrofolate + ATP = (6R)-5,10-methenyltetrahydrofolate + ADP + phosphate. Its function is as follows. Contributes to tetrahydrofolate metabolism and photorespiration through the regulation of serine hydroxymethyltransferase. Prefers the pentalutamyl to the monoglutamyl form of 5-formyltetrahydrofolate. In Arabidopsis thaliana (Mouse-ear cress), this protein is 5-formyltetrahydrofolate cyclo-ligase, mitochondrial (5FCL).